The sequence spans 208 residues: MTEDTETSSTGAGADDRTAAISRETAETTINVTLAVDGDGEATVDTGIGFFDHMLETFAKHGLFDLTVRCDGDLDIDDHHTVEDVGIVLGKSFNNALGEKRGIVRYADRSVPLDEAVATVIADISGRPHFEFSGSFSQPQIGGFTSDMARHFAYSFTMHSEITLHASIEGINAHHEVEALFKSLARTLDEATQLDPRRGDTPSTKGEL.

A disordered region spans residues 1 to 22 (MTEDTETSSTGAGADDRTAAIS).

The protein belongs to the imidazoleglycerol-phosphate dehydratase family.

The protein resides in the cytoplasm. The catalysed reaction is D-erythro-1-(imidazol-4-yl)glycerol 3-phosphate = 3-(imidazol-4-yl)-2-oxopropyl phosphate + H2O. Its pathway is amino-acid biosynthesis; L-histidine biosynthesis; L-histidine from 5-phospho-alpha-D-ribose 1-diphosphate: step 6/9. The sequence is that of Imidazoleglycerol-phosphate dehydratase from Haloquadratum walsbyi (strain DSM 16790 / HBSQ001).